The chain runs to 698 residues: UvrABC system protein B (698 aa).

The Helicase ATP-binding domain occupies 25 to 183; it reads NGLNSGLVHQ…TLIDLQFERN (159 aa). Residue 38-45 coordinates ATP; sequence GATGTGKT. Residues 91–114 carry the Beta-hairpin motif; it reads YYDAYTPEAYVPSKDLYIEKEAQI. A Helicase C-terminal domain is found at 428 to 594; it reads QIDDLLGEIK…GIVKAVRDLT (167 aa). Residues 622-657 enclose the UVR domain; it reads FKVINALEKQMKQAAKDLEFEKAALLRDQLTEMRQT.

Belongs to the UvrB family. As to quaternary structure, forms a heterotetramer with UvrA during the search for lesions. Interacts with UvrC in an incision complex.

The protein localises to the cytoplasm. Its function is as follows. The UvrABC repair system catalyzes the recognition and processing of DNA lesions. A damage recognition complex composed of 2 UvrA and 2 UvrB subunits scans DNA for abnormalities. Upon binding of the UvrA(2)B(2) complex to a putative damaged site, the DNA wraps around one UvrB monomer. DNA wrap is dependent on ATP binding by UvrB and probably causes local melting of the DNA helix, facilitating insertion of UvrB beta-hairpin between the DNA strands. Then UvrB probes one DNA strand for the presence of a lesion. If a lesion is found the UvrA subunits dissociate and the UvrB-DNA preincision complex is formed. This complex is subsequently bound by UvrC and the second UvrB is released. If no lesion is found, the DNA wraps around the other UvrB subunit that will check the other stand for damage. The chain is UvrABC system protein B from Herpetosiphon aurantiacus (strain ATCC 23779 / DSM 785 / 114-95).